We begin with the raw amino-acid sequence, 117 residues long: Putative pterin-4-alpha-carbinolamine dehydratase (117 aa).

This sequence belongs to the pterin-4-alpha-carbinolamine dehydratase family.

The catalysed reaction is (4aS,6R)-4a-hydroxy-L-erythro-5,6,7,8-tetrahydrobiopterin = (6R)-L-erythro-6,7-dihydrobiopterin + H2O. This Aeromonas salmonicida (strain A449) protein is Putative pterin-4-alpha-carbinolamine dehydratase.